A 242-amino-acid chain; its full sequence is MEGWQRAFVLHSRPWSETSLMLDVFTEESGRVRLVAKGARSKRSTLKGALQPFTPLLLRFGGRGEVKTLRSAEAVSLALPLSGITLYSGLYINELLSRVLEYETRFSELFFDYLHCIQSLAGVTGTPEPALRRFELALLGHLGYGVNFTHCAGSGEPVDDTMTYRYREEKGFIASVVIDNKTFTGRQLKALNAREFPDADTLRAAKRFTRMALKPYLGGKPLKSRELFRQFMPKRTVKTHYE.

This sequence belongs to the RecO family. As to quaternary structure, monomer.

Its function is as follows. Involved in DNA repair and RecF pathway recombination. The polypeptide is DNA repair protein RecO (Shigella dysenteriae serotype 1 (strain Sd197)).